Consider the following 681-residue polypeptide: UvrABC system protein B (681 aa).

The 390-residue stretch at 30–419 (QGVRDGRHWQ…GEVVELLVRP (390 aa)) folds into the Helicase ATP-binding domain. 43–50 (GVTGSGKT) lines the ATP pocket. A Beta-hairpin motif is present at residues 96-119 (YYDFYQPEAYLPSLDKYIAKDLRI). Positions 435–601 (QIDNLLAEIR…SIVKSVDQIL (167 aa)) constitute a Helicase C-terminal domain. The region spanning 641–676 (YAIVEGLRLEMQEAAEHMEYEKAAYLRDEITKMEQV) is the UVR domain.

It belongs to the UvrB family. In terms of assembly, forms a heterotetramer with UvrA during the search for lesions. Interacts with UvrC in an incision complex.

It is found in the cytoplasm. The UvrABC repair system catalyzes the recognition and processing of DNA lesions. A damage recognition complex composed of 2 UvrA and 2 UvrB subunits scans DNA for abnormalities. Upon binding of the UvrA(2)B(2) complex to a putative damaged site, the DNA wraps around one UvrB monomer. DNA wrap is dependent on ATP binding by UvrB and probably causes local melting of the DNA helix, facilitating insertion of UvrB beta-hairpin between the DNA strands. Then UvrB probes one DNA strand for the presence of a lesion. If a lesion is found the UvrA subunits dissociate and the UvrB-DNA preincision complex is formed. This complex is subsequently bound by UvrC and the second UvrB is released. If no lesion is found, the DNA wraps around the other UvrB subunit that will check the other stand for damage. This chain is UvrABC system protein B, found in Chlorobium chlorochromatii (strain CaD3).